Reading from the N-terminus, the 631-residue chain is Chaperone protein HtpG (631 aa).

Residues 1 to 339 (MSTNQETRGF…SNDLPLNVSR (339 aa)) form an a; substrate-binding region. Positions 340-555 (EILQDNKVTS…DDQMTTQMAK (216 aa)) are b. The c stretch occupies residues 556 to 631 (LFAAAGQAMP…NTLLSKLTSH (76 aa)).

This sequence belongs to the heat shock protein 90 family. Homodimer.

It localises to the cytoplasm. In terms of biological role, molecular chaperone. Has ATPase activity. The protein is Chaperone protein HtpG of Pasteurella multocida (strain Pm70).